Here is a 47-residue protein sequence, read N- to C-terminus: MAKGKRTFQPNNRRRARVHGFRLRMRTRAGRAIVAARRRKGRAKLTA.

It belongs to the bacterial ribosomal protein bL34 family.

The sequence is that of Large ribosomal subunit protein bL34 from Corynebacterium glutamicum (strain R).